The primary structure comprises 56 residues: Large ribosomal subunit protein bL33 (56 aa).

It belongs to the bacterial ribosomal protein bL33 family.

The sequence is that of Large ribosomal subunit protein bL33 from Rickettsia africae (strain ESF-5).